A 597-amino-acid polypeptide reads, in one-letter code: Elongation factor 4 (597 aa).

The 183-residue stretch at Gln2 to Glu184 folds into the tr-type G domain. Residues Asp14–Thr19 and Asn131–Asp134 each bind GTP.

It belongs to the TRAFAC class translation factor GTPase superfamily. Classic translation factor GTPase family. LepA subfamily.

The protein resides in the cell inner membrane. The catalysed reaction is GTP + H2O = GDP + phosphate + H(+). Its function is as follows. Required for accurate and efficient protein synthesis under certain stress conditions. May act as a fidelity factor of the translation reaction, by catalyzing a one-codon backward translocation of tRNAs on improperly translocated ribosomes. Back-translocation proceeds from a post-translocation (POST) complex to a pre-translocation (PRE) complex, thus giving elongation factor G a second chance to translocate the tRNAs correctly. Binds to ribosomes in a GTP-dependent manner. This Haemophilus ducreyi (strain 35000HP / ATCC 700724) protein is Elongation factor 4.